Reading from the N-terminus, the 471-residue chain is Glutamate--tRNA ligase (471 aa).

Positions Pro9–Gly19 match the 'HIGH' region motif. Positions 98, 100, 125, and 127 each coordinate Zn(2+). Residues Lys237 to Arg241 carry the 'KMSKS' region motif. Lys240 is an ATP binding site.

It belongs to the class-I aminoacyl-tRNA synthetase family. Glutamate--tRNA ligase type 1 subfamily. As to quaternary structure, monomer. Zn(2+) is required as a cofactor.

It localises to the cytoplasm. The enzyme catalyses tRNA(Glu) + L-glutamate + ATP = L-glutamyl-tRNA(Glu) + AMP + diphosphate. Catalyzes the attachment of glutamate to tRNA(Glu) in a two-step reaction: glutamate is first activated by ATP to form Glu-AMP and then transferred to the acceptor end of tRNA(Glu). This chain is Glutamate--tRNA ligase, found in Salmonella dublin (strain CT_02021853).